Consider the following 245-residue polypeptide: Phosphoadenosine 5'-phosphosulfate reductase (245 aa).

Catalysis depends on Cys-239, which acts as the Nucleophile; cysteine thiosulfonate intermediate.

It belongs to the PAPS reductase family. CysH subfamily.

The protein resides in the cytoplasm. It carries out the reaction [thioredoxin]-disulfide + sulfite + adenosine 3',5'-bisphosphate + 2 H(+) = [thioredoxin]-dithiol + 3'-phosphoadenylyl sulfate. Its pathway is sulfur metabolism; hydrogen sulfide biosynthesis; sulfite from sulfate: step 3/3. Catalyzes the formation of sulfite from phosphoadenosine 5'-phosphosulfate (PAPS) using thioredoxin as an electron donor. This Baumannia cicadellinicola subsp. Homalodisca coagulata protein is Phosphoadenosine 5'-phosphosulfate reductase.